The sequence spans 396 residues: Transcriptional regulator Myc-B (396 aa).

The O-linked (GlcNAc) threonine glycan is linked to Thr56. The 9aaTAD signature appears at 79–87 (EMVSEFLGD). Disordered regions lie at residues 183 to 251 (KPCK…THQS) and 298 to 318 (NRKC…RRTH). Positions 191–212 (PASTTLPLDTPPNSGSSSSSSD) are enriched in low complexity. The segment covering 213 to 230 (SESDDEDDEDEEEEEEID) has biased composition (acidic residues). Over residues 233-244 (TVEKRKSVKKSD) the composition is skewed to basic and acidic residues. A bHLH domain is found at 313–365 (DKRRTHNVLERQRRNELKLSFFALRDVIPDVANNEKAAKVVILKKATECIASM). Residues 372-393 (LISLKEQLRRKCEHLKQRLEQL) form a leucine-zipper region.

As to quaternary structure, efficient DNA binding requires dimerization with another bHLH protein. Binds DNA as a heterodimer with max.

The protein resides in the nucleus. Functionally, transcription factor that binds DNA in a non-specific manner, yet also specifically recognizes the core sequence 5'-CAC[GA]TG-3'. Activates the transcription of growth-related genes. The polypeptide is Transcriptional regulator Myc-B (Danio rerio (Zebrafish)).